Reading from the N-terminus, the 40-residue chain is Large ribosomal subunit protein bL36 (40 aa).

Belongs to the bacterial ribosomal protein bL36 family.

The chain is Large ribosomal subunit protein bL36 from Coxiella burnetii (strain Dugway 5J108-111).